A 440-amino-acid chain; its full sequence is Thymidine phosphorylase (440 aa).

The protein belongs to the thymidine/pyrimidine-nucleoside phosphorylase family. In terms of assembly, homodimer.

It carries out the reaction thymidine + phosphate = 2-deoxy-alpha-D-ribose 1-phosphate + thymine. The protein operates within pyrimidine metabolism; dTMP biosynthesis via salvage pathway; dTMP from thymine: step 1/2. The enzymes which catalyze the reversible phosphorolysis of pyrimidine nucleosides are involved in the degradation of these compounds and in their utilization as carbon and energy sources, or in the rescue of pyrimidine bases for nucleotide synthesis. The polypeptide is Thymidine phosphorylase (Salmonella paratyphi A (strain ATCC 9150 / SARB42)).